The following is a 297-amino-acid chain: Formamidopyrimidine-DNA glycosylase (297 aa).

Catalysis depends on Pro-2, which acts as the Schiff-base intermediate with DNA. Glu-3 functions as the Proton donor in the catalytic mechanism. Lys-58 (proton donor; for beta-elimination activity) is an active-site residue. Residues His-104, Arg-127, and Lys-170 each coordinate DNA. The FPG-type zinc-finger motif lies at Ser-261–Arg-297. Residue Arg-287 is the Proton donor; for delta-elimination activity of the active site.

Belongs to the FPG family. In terms of assembly, monomer. It depends on Zn(2+) as a cofactor.

It carries out the reaction Hydrolysis of DNA containing ring-opened 7-methylguanine residues, releasing 2,6-diamino-4-hydroxy-5-(N-methyl)formamidopyrimidine.. It catalyses the reaction 2'-deoxyribonucleotide-(2'-deoxyribose 5'-phosphate)-2'-deoxyribonucleotide-DNA = a 3'-end 2'-deoxyribonucleotide-(2,3-dehydro-2,3-deoxyribose 5'-phosphate)-DNA + a 5'-end 5'-phospho-2'-deoxyribonucleoside-DNA + H(+). In terms of biological role, involved in base excision repair of DNA damaged by oxidation or by mutagenic agents. Acts as a DNA glycosylase that recognizes and removes damaged bases. Has a preference for oxidized purines, such as 7,8-dihydro-8-oxoguanine (8-oxoG). Has AP (apurinic/apyrimidinic) lyase activity and introduces nicks in the DNA strand. Cleaves the DNA backbone by beta-delta elimination to generate a single-strand break at the site of the removed base with both 3'- and 5'-phosphates. The polypeptide is Formamidopyrimidine-DNA glycosylase (Chelativorans sp. (strain BNC1)).